The sequence spans 256 residues: Pimeloyl-[acyl-carrier protein] methyl ester esterase (256 aa).

In terms of domain architecture, AB hydrolase-1 spans 15–242 (HLVLLHGWGL…AAHAPFISHP (228 aa)). Residues Trp-22, 82-83 (SL), and 143-147 (FLALQ) contribute to the substrate site. Ser-82 functions as the Nucleophile in the catalytic mechanism. Catalysis depends on residues Asp-207 and His-235. His-235 contacts substrate.

Belongs to the AB hydrolase superfamily. Carboxylesterase BioH family. In terms of assembly, monomer.

The protein localises to the cytoplasm. It carries out the reaction 6-carboxyhexanoyl-[ACP] methyl ester + H2O = 6-carboxyhexanoyl-[ACP] + methanol + H(+). It functions in the pathway cofactor biosynthesis; biotin biosynthesis. Its function is as follows. The physiological role of BioH is to remove the methyl group introduced by BioC when the pimeloyl moiety is complete. It allows to synthesize pimeloyl-ACP via the fatty acid synthetic pathway through the hydrolysis of the ester bonds of pimeloyl-ACP esters. The polypeptide is Pimeloyl-[acyl-carrier protein] methyl ester esterase (Escherichia coli (strain SMS-3-5 / SECEC)).